A 156-amino-acid polypeptide reads, in one-letter code: Cyanate hydratase (156 aa).

Active-site residues include Arg96, Glu99, and Ser122.

It belongs to the cyanase family.

It carries out the reaction cyanate + hydrogencarbonate + 3 H(+) = NH4(+) + 2 CO2. Catalyzes the reaction of cyanate with bicarbonate to produce ammonia and carbon dioxide. The sequence is that of Cyanate hydratase from Burkholderia thailandensis (strain ATCC 700388 / DSM 13276 / CCUG 48851 / CIP 106301 / E264).